A 472-amino-acid chain; its full sequence is MNNFEAIIGIEIHLELNTKTKMFSPSKIDFNAEANTTVNQIDLGYPGTLPLLNKEAVVSGIKLAKALNMTIDRELHFDRKNYFYPDLPKGYQITQFYRPIGSNGYVEINTDLGTKKISIERIHLEEDTARQYHGEKTKLDYNRAGVPLIEIVSNPVISSADEAVAYVDMIRRIALSLNISSAKMEQGSLRADINISLRPKGYSKFGTKVEIKNINSFRAIKNAIEYEIKLQEQKILTNEPILQQTKRYDEETQSTIVMRTKTGTIDYKYFPESNIPFIKLSDEFINNVKLNELPWEKESRYKKEEIQDIYIKSLTNDIELANYFDSINYADRNKLSKLFFAEVVSLANSKNVKAYELNIKTTDLEKTIDLLDKEIISGKSFKKIVPLLVNFDGDIDQLIKEHDLVQISDENIITKWVNEIIAKNEALVTEYTERSEKVIKFVLGNIMKVWGGKVNPQKANEVLLKILNEKFK.

Belongs to the GatB/GatE family. GatB subfamily. Heterotrimer of A, B and C subunits.

It catalyses the reaction L-glutamyl-tRNA(Gln) + L-glutamine + ATP + H2O = L-glutaminyl-tRNA(Gln) + L-glutamate + ADP + phosphate + H(+). The enzyme catalyses L-aspartyl-tRNA(Asn) + L-glutamine + ATP + H2O = L-asparaginyl-tRNA(Asn) + L-glutamate + ADP + phosphate + 2 H(+). In terms of biological role, allows the formation of correctly charged Asn-tRNA(Asn) or Gln-tRNA(Gln) through the transamidation of misacylated Asp-tRNA(Asn) or Glu-tRNA(Gln) in organisms which lack either or both of asparaginyl-tRNA or glutaminyl-tRNA synthetases. The reaction takes place in the presence of glutamine and ATP through an activated phospho-Asp-tRNA(Asn) or phospho-Glu-tRNA(Gln). The protein is Aspartyl/glutamyl-tRNA(Asn/Gln) amidotransferase subunit B of Mycoplasmopsis agalactiae (strain NCTC 10123 / CIP 59.7 / PG2) (Mycoplasma agalactiae).